We begin with the raw amino-acid sequence, 276 residues long: NH(3)-dependent NAD(+) synthetase (276 aa).

43-50 lines the ATP pocket; sequence GISGGVDS. Residue D49 participates in Mg(2+) binding. Residue R146 coordinates deamido-NAD(+). Residue T166 participates in ATP binding. A Mg(2+)-binding site is contributed by E171. Deamido-NAD(+)-binding residues include K179 and D186. Positions 195 and 217 each coordinate ATP. Position 266-267 (266-267) interacts with deamido-NAD(+); sequence HK.

This sequence belongs to the NAD synthetase family. In terms of assembly, homodimer.

The enzyme catalyses deamido-NAD(+) + NH4(+) + ATP = AMP + diphosphate + NAD(+) + H(+). The protein operates within cofactor biosynthesis; NAD(+) biosynthesis; NAD(+) from deamido-NAD(+) (ammonia route): step 1/1. In terms of biological role, catalyzes the ATP-dependent amidation of deamido-NAD to form NAD. Uses ammonia as a nitrogen source. In Shewanella frigidimarina (strain NCIMB 400), this protein is NH(3)-dependent NAD(+) synthetase.